A 160-amino-acid polypeptide reads, in one-letter code: Transcription antitermination protein NusB (160 aa).

Belongs to the NusB family.

In terms of biological role, involved in transcription antitermination. Required for transcription of ribosomal RNA (rRNA) genes. Binds specifically to the boxA antiterminator sequence of the ribosomal RNA (rrn) operons. This chain is Transcription antitermination protein NusB, found in Sinorhizobium fredii (strain NBRC 101917 / NGR234).